The chain runs to 105 residues: Large ribosomal subunit protein bL21 (105 aa).

This sequence belongs to the bacterial ribosomal protein bL21 family. In terms of assembly, part of the 50S ribosomal subunit. Contacts protein L20.

In terms of biological role, this protein binds to 23S rRNA in the presence of protein L20. This is Large ribosomal subunit protein bL21 from Methylobacterium sp. (strain 4-46).